The sequence spans 202 residues: Peptide deformylase (202 aa).

The disordered stretch occupies residues 1-24; the sequence is MAGSFAQLAKNAEKKKPSISVSKE. Fe cation contacts are provided by C121 and H163. E164 is an active-site residue. H167 is a binding site for Fe cation.

It belongs to the polypeptide deformylase family. Fe(2+) is required as a cofactor.

The catalysed reaction is N-terminal N-formyl-L-methionyl-[peptide] + H2O = N-terminal L-methionyl-[peptide] + formate. In terms of biological role, removes the formyl group from the N-terminal Met of newly synthesized proteins. Requires at least a dipeptide for an efficient rate of reaction. N-terminal L-methionine is a prerequisite for activity but the enzyme has broad specificity at other positions. This Prochlorococcus marinus (strain NATL1A) protein is Peptide deformylase.